A 328-amino-acid chain; its full sequence is Beta-ketoacyl-[acyl-carrier-protein] synthase III (328 aa).

Catalysis depends on residues Cys122 and His255. The tract at residues 256–260 (QANIR) is ACP-binding. Asn285 is a catalytic residue.

The protein belongs to the thiolase-like superfamily. FabH family. Homodimer.

The protein localises to the cytoplasm. The enzyme catalyses malonyl-[ACP] + acetyl-CoA + H(+) = 3-oxobutanoyl-[ACP] + CO2 + CoA. The protein operates within lipid metabolism; fatty acid biosynthesis. Catalyzes the condensation reaction of fatty acid synthesis by the addition to an acyl acceptor of two carbons from malonyl-ACP. Catalyzes the first condensation reaction which initiates fatty acid synthesis and may therefore play a role in governing the total rate of fatty acid production. Possesses both acetoacetyl-ACP synthase and acetyl transacylase activities. Its substrate specificity determines the biosynthesis of branched-chain and/or straight-chain of fatty acids. The polypeptide is Beta-ketoacyl-[acyl-carrier-protein] synthase III (Herminiimonas arsenicoxydans).